Here is a 410-residue protein sequence, read N- to C-terminus: Chloride intracellular channel protein 5 (410 aa).

The short motif at 191-194 (CPFS) is the G-site element. Residues 193-213 (FSQRLFMILWLKGVVFNVTTV) form a helical membrane-spanning segment. The GST C-terminal domain maps to 260-400 (YPKLAAKHRE…AADSEIELAY (141 aa)).

The protein belongs to the chloride channel CLIC family. As to quaternary structure, component of a multimeric complex consisting of several cytoskeletal proteins, including actin, ezrin, alpha-actinin, gelsolin, and IQGAP1. Interacts with AKAP9. Interacts with TPRN. TPRN, CLIC5 and PTPQR form concentric rings at the base of stereocilia and may form a complex. Interacts with EZR, MYO6 and RDX; the proteins may work together as a complex to stabilize linkages between the plasma membrane and subjacent actin cytoskeleton at the stereocilium base. As to expression, widely expressed in both fetal and adult human tissues. Isoform 1 is expressed in renal glomeruli endothelial cells and podocytes (at protein level).

It is found in the cytoplasm. The protein resides in the cytoskeleton. It localises to the cell cortex. The protein localises to the membrane. Its subcellular location is the apical cell membrane. It is found in the mitochondrion. The protein resides in the cell projection. It localises to the stereocilium. The protein localises to the golgi apparatus. Its subcellular location is the microtubule organizing center. It is found in the centrosome. It carries out the reaction chloride(in) = chloride(out). The enzyme catalyses Na(+)(in) = Na(+)(out). The catalysed reaction is K(+)(in) = K(+)(out). With respect to regulation, inhibited by F-actin. Its function is as follows. In the soluble state, catalyzes glutaredoxin-like thiol disulfide exchange reactions with reduced glutathione as electron donor. Can insert into membranes and form non-selective ion channels almost equally permeable to Na(+), K(+) and Cl(-). Required for normal hearing. It is necessary for the formation of stereocilia in the inner ear and normal development of the organ of Corti. May play a role in the regulation of transepithelial ion absorption and secretion. Is required for the development and/or maintenance of the proper glomerular endothelial cell and podocyte architecture. Plays a role in formation of the lens suture in the eye, which is important for normal optical properties of the lens. In Homo sapiens (Human), this protein is Chloride intracellular channel protein 5.